The sequence spans 270 residues: MLPPLKKGWQRTLDLRFQQAGGKTVLASAQHVGPLTVQRPFYPEEETCHLYLLHPPGGIVGGDELTISAHLAPGCHTLITMPGASKFYRSSGAQALVRQQLTLAPQATLEWLPQDAIFFPGANARLFTTFHLCAFSRLLAWDLLCLGRPVIGETFSHGTLSNRLEVWVDDEPLLVERLQLQEGELSSVAERPWVGTLLCYPATDALLDGVRDALAPLGLYAGASLTDRLLTVRFLSDDNLICQRVMRDVWQFLRPHLTGKSPVLPRIWLT.

It belongs to the UreD family. As to quaternary structure, ureD, UreF and UreG form a complex that acts as a GTP-hydrolysis-dependent molecular chaperone, activating the urease apoprotein by helping to assemble the nickel containing metallocenter of UreC. The UreE protein probably delivers the nickel.

It localises to the cytoplasm. Its function is as follows. Required for maturation of urease via the functional incorporation of the urease nickel metallocenter. In Klebsiella pneumoniae, this protein is Urease accessory protein UreD.